The chain runs to 81 residues: Small cysteine-rich protein 1 2 (81 aa).

An N-terminal signal peptide occupies residues 1–19; the sequence is MGVNFNICLLLLLVATISS. Positions 20 to 39 are excised as a propeptide; that stretch reads QPLKATEKDDSTDENPFGIY.

Belongs to the Cnidaria small cysteine-rich protein (SCRiP) family. alpha subfamily. The basic myotoxic domain of rattlesnake crotamine toxins (with 6 Cys residues) has been detected in this protein. However, this protein contains 2 additional Cys at the C-terminal region. Hence, this protein may contain 4 disulfide bonds instead of the 3 suggested by the myotoxin domain.

It is found in the secreted. It localises to the nematocyst. Its function is as follows. Induces neurotoxic symptoms on zebrafish. Has also been claimed to be implied in calcification, but tests on homolog proteins suggest that proteins of this family have a neurotoxic function and not a calcification function. The protein is Small cysteine-rich protein 1 2 of Montipora capitata (Rice coral).